Reading from the N-terminus, the 1383-residue chain is MEDRGPPVFAEDWKCLSESPPVQEGPAAQATFEPSKPLSIAHKHLSRKNGLSRLCQSRMALSEDRWSSYCLSSLAAQNICTSKLHCAAAPEYADPTAGPLGSTSCCSLLRGLASGCSGSLLSTPVCNPNKAVFTVDAKTTEILVANDKACSLLGYSSHDLIGQKLAQFFLKSDSEVVEALSEEHVEADGHAAVVFGTVVDIVSRIGEKIPVSVWIKRLQQDRGLCCVVVLEPVERVSAWVAFQSDGTITSCDSLFAHLHGFTSPKDVVGQCVIDLIPSMQLPPPGQHIPKSLKIQRSVGRARDGTTFPLSLKLKSKPSGRAVADSEAASEPGYQASVWVFCTISGLITLLPDGTIYGVNHSFALMLFGYGKTELLGKNITFLIPGFYHYMDLTYDSSVQLPDLVNCLDIGRKSGPGEMNSDAQHNWELASGAQGPRIDVVLARDHMPSQDETLKLVGGQVSSRTQTRLETGYKILPSSACQPSLGVDSNPEDGEQSLLTDQQSIPKRNLPAHGGQNQLDTSEISLPVLKEHLLSEIQKNISEESPLTHRKWLSKVQQNPTKGSLPIHEEQLLFAGQHIHVLGKEDPSAAESYRESLLEESKSKPVDAKLFASCEDSEPLVSVKDRGSSVDTCNLHQEAQLELMGVSSPNPWADATMPEPHTTGQIAGGSLTYCPQYRSEWASQQRGQDSAPSPSGMACVLLGTPTLDEPWPGVRNDREELQTCLIKEQLSKSSCEGNLGISRVELVPEEHPPFTAPVSFCDLGGRDLHASRSGSSSACYALATDLPGVLEAVEAQEADVNSYSWNLKELFLKDQTDRTPSHCSCTTSELSEAPSLSVVGSDLDVGILHRQTSDILVDREMLLLTGTYFDLSEGQRFQEMGAGHDRAELSNISLVSSEHYETSDIESPGCDPPLPDPGPNDMCLSAEKPRPSAQITSTPVARGATSLQQEIQEGIYSGSCYHRDGLQLSIQFEVKRVELQGSATLFCCWLVKDLFHSHRDSATRTRLFLASLPSSTHSMPELSGSSFGEVLRAKPWFEESPTPAELEGLAACEGEYDYKYNTISPLGSGAFGFVWTAVEKECNKEVVVKFIKKEKVLEDCWIEDPKLGRVTLEIAILSKVDHANIIKVLDIFENQEFFQLVMEKHGSGMDLFAFIDHHPCLDEPLASFIFRQLVSAVGYLHSQGIIHRDIKDENIVIAEDFTIKLIDFGSAAYLERGKLFYTFCGTIEYCAPEVLIGNPYRGPELEMWSLGVTLYTLIFEENPFCEVEETMEAVIHPPFLVSQELMSLLSGLLQPCPEQRTTLEKLIRDPWVTQPVNLASYTWEEVCRTNQPESGLLSAASLEIGSRSPSEMAQREGLCGPPAPRETRGDQHCLHLKDPSLPVS.

Met1 carries the post-translational modification N-acetylmethionine. Ser19 is subject to Phosphoserine. Thr31 bears the Phosphothreonine mark. 2 consecutive PAS domains span residues 117-188 and 333-400; these read SGSL…VEAD and YQAS…SVQL. Ser1000 is subject to Phosphoserine. The Protein kinase domain maps to 1059 to 1311; it reads YNTISPLGSG…LEKLIRDPWV (253 aa). Residues 1065-1073, Lys1088, and 1142-1149 contribute to the ATP site; these read LGSGAFGFV and EKHGSGMD. Catalysis depends on Asp1188, which acts as the Proton acceptor. Asp1206 contributes to the ATP binding site. Phosphothreonine; by autocatalysis is present on residues Thr1221 and Thr1225. The disordered stretch occupies residues 1344–1383; sequence GSRSPSEMAQREGLCGPPAPRETRGDQHCLHLKDPSLPVS. Residues 1364 to 1377 show a composition bias toward basic and acidic residues; the sequence is RETRGDQHCLHLKD.

The protein belongs to the protein kinase superfamily. CAMK Ser/Thr protein kinase family. Autophosphorylated on Thr-1221 and Thr-1225. Autophosphorylation is activated by phospholipids. Ubiquitously expressed. Strongly up-regulated in postmeiotic germ cells during spermatogenesis.

Its subcellular location is the cytoplasm. The protein resides in the nucleus. It catalyses the reaction L-seryl-[protein] + ATP = O-phospho-L-seryl-[protein] + ADP + H(+). The catalysed reaction is L-threonyl-[protein] + ATP = O-phospho-L-threonyl-[protein] + ADP + H(+). With respect to regulation, protein kinase activity is inhibited by the first PAS domain: binding of an unidentified ligand desinhibits the protein kinase activity. May be activated by autophosphorylation on Thr-1221 and Thr-1225. Autophosphorylation is enhanced upon phosphatidylinositol monophosphate (phosphatidylinositol 4-phosphate) binding and inhibited upon phosphatidylinositol bi- and tri-phosphate binding. In contrast, phosphorylation of target proteins is inhibited upon all phosphatidylinositol-binding (phosphatidylinositol mono- bi- and tri-phosphate). In terms of biological role, serine/threonine-protein kinase involved in energy homeostasis and protein translation. Phosphorylates EEF1A1, GYS1, PDX1 and RPS6. Probably plays a role under changing environmental conditions (oxygen, glucose, nutrition), rather than under standard conditions. Acts as a sensor involved in energy homeostasis: regulates glycogen synthase synthesis by mediating phosphorylation of GYS1, leading to GYS1 inactivation. May be involved in glucose-stimulated insulin production in pancreas and regulation of glucagon secretion by glucose in alpha cells; however such data require additional evidences. May play a role in regulation of protein translation by phosphorylating EEF1A1, leading to increase translation efficiency. May also participate in respiratory regulation. This is PAS domain-containing serine/threonine-protein kinase (Pask) from Mus musculus (Mouse).